Reading from the N-terminus, the 239-residue chain is Ribosomal RNA small subunit methyltransferase G (239 aa).

S-adenosyl-L-methionine is bound by residues Gly-78, Phe-83, 129–130 (AE), and Arg-148.

This sequence belongs to the methyltransferase superfamily. RNA methyltransferase RsmG family.

It localises to the cytoplasm. Specifically methylates the N7 position of a guanine in 16S rRNA. The protein is Ribosomal RNA small subunit methyltransferase G of Clostridium botulinum (strain Loch Maree / Type A3).